The sequence spans 55 residues: Large ribosomal subunit protein bL33 (55 aa).

Post-translationally, the protein is methylated on either Ala-2 or Lys-3.

This chain is Large ribosomal subunit protein bL33, found in Rhodopseudomonas palustris (strain ATCC BAA-98 / CGA009).